We begin with the raw amino-acid sequence, 89 residues long: UPF0367 protein PMM0124 (89 aa).

The protein belongs to the UPF0367 family.

The polypeptide is UPF0367 protein PMM0124 (Prochlorococcus marinus subsp. pastoris (strain CCMP1986 / NIES-2087 / MED4)).